We begin with the raw amino-acid sequence, 191 residues long: MLISDRDIRAEIDSQRIVLEPFEPAMVQPSSVDVRIDKFFRLFDNHKYAHIDPAQEQPELTRLVEVEQDEAFILHPGEFVLGSTYETVTLPDDIAARLEGKSSLGRLGLLTHSTAGFIDPGFSGHVTLELSNMATLPIKLWPGMKIGQLCFFRLSSSAEFPYGQGEYGNRYQGQRGPTASRSHLNFHRTRI.

Residues 101 to 106 (KSSLGR), Asp-119, 127 to 129 (TLE), Gln-148, Tyr-162, and Gln-174 each bind dCTP. Glu-129 functions as the Proton donor/acceptor in the catalytic mechanism. Residues 169-191 (NRYQGQRGPTASRSHLNFHRTRI) are disordered. Residues 171–183 (YQGQRGPTASRSH) are compositionally biased toward polar residues.

Belongs to the dCTP deaminase family. In terms of assembly, homotrimer.

The enzyme catalyses dCTP + 2 H2O = dUMP + NH4(+) + diphosphate. It participates in pyrimidine metabolism; dUMP biosynthesis; dUMP from dCTP: step 1/1. Its function is as follows. Bifunctional enzyme that catalyzes both the deamination of dCTP to dUTP and the hydrolysis of dUTP to dUMP without releasing the toxic dUTP intermediate. The sequence is that of dCTP deaminase, dUMP-forming from Pseudarthrobacter chlorophenolicus (strain ATCC 700700 / DSM 12829 / CIP 107037 / JCM 12360 / KCTC 9906 / NCIMB 13794 / A6) (Arthrobacter chlorophenolicus).